Reading from the N-terminus, the 119-residue chain is Holo-[acyl-carrier-protein] synthase (119 aa).

Mg(2+)-binding residues include Asp-8 and Glu-58.

The protein belongs to the P-Pant transferase superfamily. AcpS family. Requires Mg(2+) as cofactor.

The protein localises to the cytoplasm. The enzyme catalyses apo-[ACP] + CoA = holo-[ACP] + adenosine 3',5'-bisphosphate + H(+). In terms of biological role, transfers the 4'-phosphopantetheine moiety from coenzyme A to a Ser of acyl-carrier-protein. The sequence is that of Holo-[acyl-carrier-protein] synthase from Halalkalibacterium halodurans (strain ATCC BAA-125 / DSM 18197 / FERM 7344 / JCM 9153 / C-125) (Bacillus halodurans).